The primary structure comprises 567 residues: Urease subunit alpha (567 aa).

In terms of domain architecture, Urease spans 129–567 (GGIDSHIHFI…LPLAQRYFLF (439 aa)). 3 residues coordinate Ni(2+): histidine 134, histidine 136, and lysine 217. An N6-carboxylysine modification is found at lysine 217. Histidine 219 is a substrate binding site. Ni(2+) is bound by residues histidine 246 and histidine 272. The active-site Proton donor is the histidine 320. Position 360 (aspartate 360) interacts with Ni(2+).

The protein belongs to the metallo-dependent hydrolases superfamily. Urease alpha subunit family. In terms of assembly, heterotrimer of UreA (gamma), UreB (beta) and UreC (alpha) subunits. Three heterotrimers associate to form the active enzyme. Ni cation serves as cofactor. In terms of processing, carboxylation allows a single lysine to coordinate two nickel ions.

It is found in the cytoplasm. The enzyme catalyses urea + 2 H2O + H(+) = hydrogencarbonate + 2 NH4(+). It functions in the pathway nitrogen metabolism; urea degradation; CO(2) and NH(3) from urea (urease route): step 1/1. This Pseudomonas putida (strain W619) protein is Urease subunit alpha.